A 111-amino-acid chain; its full sequence is Cell division protein FtsL (111 aa).

Over 1–26 (MAQARTEFSKVAAPRKLEEMYAQRGD) the chain is Cytoplasmic. A helical membrane pass occupies residues 27–47 (LFPYLLAVLVLLTLVSVFHVW). The Periplasmic segment spans residues 48 to 111 (SRVRVVDLNL…PTDQQVVVVK (64 aa)). Residues 51-85 (RVVDLNLEVAEVARQLKVAQEEQNRLKLEVASLKT) adopt a coiled-coil conformation.

It belongs to the FtsL family.

The protein localises to the cell inner membrane. Functionally, essential cell division protein. This Geobacter sulfurreducens (strain ATCC 51573 / DSM 12127 / PCA) protein is Cell division protein FtsL.